The chain runs to 465 residues: tRNA-2-methylthio-N(6)-dimethylallyladenosine synthase (465 aa).

The MTTase N-terminal domain maps to 26–141 (MRAHIITYGC…LPEALKANER (116 aa)). [4Fe-4S] cluster contacts are provided by cysteine 35, cysteine 71, cysteine 104, cysteine 173, cysteine 177, and cysteine 180. In terms of domain architecture, Radical SAM core spans 159–388 (PKGALSAHVT…IEKQKEWSYR (230 aa)). Residues 391–453 (LEWVGKTVEV…PHLLFGEVVG (63 aa)) form the TRAM domain.

It belongs to the methylthiotransferase family. MiaB subfamily. Monomer. [4Fe-4S] cluster serves as cofactor.

It is found in the cytoplasm. The catalysed reaction is N(6)-dimethylallyladenosine(37) in tRNA + (sulfur carrier)-SH + AH2 + 2 S-adenosyl-L-methionine = 2-methylsulfanyl-N(6)-dimethylallyladenosine(37) in tRNA + (sulfur carrier)-H + 5'-deoxyadenosine + L-methionine + A + S-adenosyl-L-homocysteine + 2 H(+). In terms of biological role, catalyzes the methylthiolation of N6-(dimethylallyl)adenosine (i(6)A), leading to the formation of 2-methylthio-N6-(dimethylallyl)adenosine (ms(2)i(6)A) at position 37 in tRNAs that read codons beginning with uridine. The protein is tRNA-2-methylthio-N(6)-dimethylallyladenosine synthase of Thermus thermophilus (strain ATCC BAA-163 / DSM 7039 / HB27).